The primary structure comprises 195 residues: MAKLDTAALNQLFTQARTRNGWSDQPIPEAVLRELYDLVKFGPTAANTTPARFVFVQSPEAKARLAALSSGSNGPKILQAPVTVIVGYDLDFPETLDKLFPNAPGAKNWFGDPVAKEVGALRNSSLQGGYFILAARALGLDVGPMSGFDNAGVDKEFFAGTNIKSNFIASIGYGTEEGLFPRNPRLDFEEAARII.

It belongs to the nitroreductase family. HadB/RutE subfamily. FMN serves as cofactor.

This Caulobacter sp. (strain K31) protein is Putative NADH dehydrogenase/NAD(P)H nitroreductase Caul_0018.